A 414-amino-acid chain; its full sequence is tRNA dimethylallyltransferase (414 aa).

33-40 provides a ligand contact to ATP; the sequence is APTASGKT. 35–40 is a binding site for substrate; that stretch reads TASGKT. Interaction with substrate tRNA stretches follow at residues 58 to 61, 182 to 186, and 266 to 271; these read DSAL, QRITR, and RCVGYR.

This sequence belongs to the IPP transferase family. In terms of assembly, monomer. Requires Mg(2+) as cofactor.

The catalysed reaction is adenosine(37) in tRNA + dimethylallyl diphosphate = N(6)-dimethylallyladenosine(37) in tRNA + diphosphate. Catalyzes the transfer of a dimethylallyl group onto the adenine at position 37 in tRNAs that read codons beginning with uridine, leading to the formation of N6-(dimethylallyl)adenosine (i(6)A). The sequence is that of tRNA dimethylallyltransferase from Psychrobacter cryohalolentis (strain ATCC BAA-1226 / DSM 17306 / VKM B-2378 / K5).